The following is a 591-amino-acid chain: Aspartate--tRNA ligase (591 aa).

E173 is a binding site for L-aspartate. The aspartate stretch occupies residues 197 to 200; the sequence is QLFK. An L-aspartate-binding site is contributed by R219. ATP is bound by residues 219 to 221 and Q228; that span reads RDE. Residue H448 participates in L-aspartate binding. ATP is bound at residue E482. R489 is an L-aspartate binding site. 534–537 serves as a coordination point for ATP; the sequence is GLDR.

It belongs to the class-II aminoacyl-tRNA synthetase family. Type 1 subfamily. In terms of assembly, homodimer.

It localises to the cytoplasm. It catalyses the reaction tRNA(Asp) + L-aspartate + ATP = L-aspartyl-tRNA(Asp) + AMP + diphosphate. Its function is as follows. Catalyzes the attachment of L-aspartate to tRNA(Asp) in a two-step reaction: L-aspartate is first activated by ATP to form Asp-AMP and then transferred to the acceptor end of tRNA(Asp). The protein is Aspartate--tRNA ligase of Shewanella sp. (strain ANA-3).